The following is a 353-amino-acid chain: Phospho-N-acetylmuramoyl-pentapeptide-transferase (353 aa).

10 helical membrane-spanning segments follow: residues 24–44 (LGFF…ILWA), 66–86 (TPTM…LLCA), 88–108 (LGNP…FVGF), 129–149 (FGML…KGLD), 160–180 (PLFE…FLSA), 192–212 (GLAS…VYVA), 229–249 (VGEL…FLWY), 256–276 (VFMG…NAIV), 281–301 (ILLV…ILQV), and 330–350 (KVIV…LLSL).

Belongs to the glycosyltransferase 4 family. MraY subfamily. Mg(2+) serves as cofactor.

It is found in the cell inner membrane. The catalysed reaction is UDP-N-acetyl-alpha-D-muramoyl-L-alanyl-gamma-D-glutamyl-meso-2,6-diaminopimeloyl-D-alanyl-D-alanine + di-trans,octa-cis-undecaprenyl phosphate = di-trans,octa-cis-undecaprenyl diphospho-N-acetyl-alpha-D-muramoyl-L-alanyl-D-glutamyl-meso-2,6-diaminopimeloyl-D-alanyl-D-alanine + UMP. It functions in the pathway cell wall biogenesis; peptidoglycan biosynthesis. Catalyzes the initial step of the lipid cycle reactions in the biosynthesis of the cell wall peptidoglycan: transfers peptidoglycan precursor phospho-MurNAc-pentapeptide from UDP-MurNAc-pentapeptide onto the lipid carrier undecaprenyl phosphate, yielding undecaprenyl-pyrophosphoryl-MurNAc-pentapeptide, known as lipid I. This chain is Phospho-N-acetylmuramoyl-pentapeptide-transferase, found in Helicobacter acinonychis (strain Sheeba).